The following is a 352-amino-acid chain: Photosystem II D2 protein (352 aa).

The helical transmembrane segment at 40-60 (CAYLALGGWLTGTTFVTSWYT) threads the bilayer. A chlorophyll a-binding site is contributed by His117. A helical transmembrane segment spans residues 124–140 (GFMLRQFEIARLVGVRP). Pheophytin a contacts are provided by Gln129 and Asn142. The helical transmembrane segment at 152–165 (VFVSVFLIYPLGQS) threads the bilayer. His197 contacts chlorophyll a. Residues 207 to 227 (GALLCAIHGATVENTLFQDGE) traverse the membrane as a helical segment. Positions 214 and 261 each coordinate a plastoquinone. A Fe cation-binding site is contributed by His214. Fe cation is bound at residue His268. The helical transmembrane segment at 278 to 294 (GLWMSSIGVVGLALNLR) threads the bilayer.

The protein belongs to the reaction center PufL/M/PsbA/D family. In terms of assembly, PSII is composed of 1 copy each of membrane proteins PsbA, PsbB, PsbC, PsbD, PsbE, PsbF, PsbH, PsbI, PsbJ, PsbK, PsbL, PsbM, PsbT, PsbX, PsbY, PsbZ, Psb30/Ycf12, peripheral proteins PsbO, CyanoQ (PsbQ), PsbU, PsbV and a large number of cofactors. It forms dimeric complexes. The cofactor is The D1/D2 heterodimer binds P680, chlorophylls that are the primary electron donor of PSII, and subsequent electron acceptors. It shares a non-heme iron and each subunit binds pheophytin, quinone, additional chlorophylls, carotenoids and lipids. There is also a Cl(-1) ion associated with D1 and D2, which is required for oxygen evolution. The PSII complex binds additional chlorophylls, carotenoids and specific lipids..

The protein localises to the cellular thylakoid membrane. The catalysed reaction is 2 a plastoquinone + 4 hnu + 2 H2O = 2 a plastoquinol + O2. Functionally, photosystem II (PSII) is a light-driven water:plastoquinone oxidoreductase that uses light energy to abstract electrons from H(2)O, generating O(2) and a proton gradient subsequently used for ATP formation. It consists of a core antenna complex that captures photons, and an electron transfer chain that converts photonic excitation into a charge separation. The D1/D2 (PsbA/PsbD) reaction center heterodimer binds P680, the primary electron donor of PSII as well as several subsequent electron acceptors. D2 is needed for assembly of a stable PSII complex. The protein is Photosystem II D2 protein of Synechococcus sp. (strain JA-2-3B'a(2-13)) (Cyanobacteria bacterium Yellowstone B-Prime).